Here is a 629-residue protein sequence, read N- to C-terminus: Tudor and KH domain-containing protein homolog (629 aa).

Residues 9–29 traverse the membrane as a helical segment; sequence LPIALGLSLVTVTAFVAYYVL. 2 KH domains span residues 46–109 and 119–185; these read INTI…ETLI and IMSE…KKLV. The tract at residues 198 to 240 is disordered; sequence IEQSKRPPRHSSSPPSPCPSPGDRDADADAQGDVDHTRVKYKR. Basic and acidic residues predominate over residues 219-240; sequence GDRDADADAQGDVDHTRVKYKR. The region spanning 297–362 is the Tudor domain; it reads HVSVGQVVAA…CELRADLLRL (66 aa). The disordered stretch occupies residues 464–526; sequence PAPSPRPSPP…GDDSKDKDGI (63 aa).

Belongs to the Tdrkh family. In terms of assembly, interacts with (symmetrically methylated) Siwi. Interacts with (symmetrically methylated) Ago3. Interacts with PNLDC1/trimmer; interaction takes place on the mitochondrial surface and recruits PNLDC1/trimmer to Siwi-bound pre-piRNAs.

The protein localises to the mitochondrion outer membrane. Participates in the primary piRNA biogenesis pathway and is required during spermatogenesis to repress transposable elements and prevent their mobilization, which is essential for the germline integrity. The piRNA metabolic process mediates the repression of transposable elements during meiosis by forming complexes composed of piRNAs and Piwi proteins (Siwi or Ago3) and govern the methylation and subsequent repression of transposons. Required for the final steps of primary piRNA biogenesis by participating in the processing of 31-37 nt intermediates into mature piRNAs: acts by recruiting the exonuclease PNLDC1/trimmer to Siwi-bound pre-piRNAs. This is Tudor and KH domain-containing protein homolog from Bombyx mori (Silk moth).